The sequence spans 230 residues: Protein FAM3A (230 aa).

A signal peptide spans 1–33 (MRLAGPLRIVVLVVSVGVTWIVVSILLGGPGSG). 2 cysteine pairs are disulfide-bonded: Cys59–Cys87 and Cys65–Cys222. In terms of domain architecture, GG-type lectin spans 68 to 226 (EHLAFRVVSG…LEMEGCIPRR (159 aa)).

This sequence belongs to the FAM3 family. As to expression, in similar amounts in testis, pancreas, adrenal, placenta, brain, fetal brain, liver, kidney, skeletal muscle and heart.

The protein localises to the secreted. Functionally, may act as a defensin against invading fungal microorganisms. This chain is Protein FAM3A (FAM3A), found in Homo sapiens (Human).